Consider the following 1403-residue polypeptide: Baculoviral IAP repeat-containing protein 1e (1403 aa).

BIR repeat units follow at residues 60 to 127 (EAKR…CEFL), 159 to 227 (EEAR…CEFL), and 278 to 345 (EELR…CVFL). Residues cysteine 315, cysteine 318, histidine 335, and cysteine 342 each coordinate Zn(2+). Residues 464–759 (SVMCVEGETG…EFLAAVRLTE (296 aa)) enclose the NACHT domain. Residue 473 to 478 (GSGKTT) participates in ATP binding.

Component of the NLRC4 inflammasome, at least composed of NLRC4, caspase-1 (CASP1) and some NAIP protein. Flagellin binding by NAIP5 triggers assembly of the inflammasome, a huge complex that contains a single NAIP5 chain and multiple copies of NLRC4. In terms of assembly, (Microbial infection) Interacts with S.typhimurium (Salmonella) flagellin. As to quaternary structure, (Microbial infection) Interacts with L.pneumophila flagellin. Detected in macrophages (at protein level).

Functionally, sensor component of the NLRC4 inflammasome that specifically recognizes and binds flagellin from pathogenic bacteria such as Legionella or Salmonella. Association of pathogenic bacteria proteins drives in turn drive assembly and activation of the NLRC4 inflammasome, promoting caspase-1 activation, cytokine production and macrophage pyroptosis. The NLRC4 inflammasome is activated as part of the innate immune response to a range of intracellular bacteria. The NLRC4 inflammasome senses Gram-negative bacteria such as L.pneumophila and P.aeruginosa, enteric pathogens S.typhimurium (Salmonella) and S.flexneri. May contribute to prevent motor-neuron apoptosis induced by a variety of signals. The polypeptide is Baculoviral IAP repeat-containing protein 1e (Mus musculus (Mouse)).